The chain runs to 288 residues: Elongation factor Ts (288 aa).

Residues 82 to 85 (TDFV) are involved in Mg(2+) ion dislocation from EF-Tu.

It belongs to the EF-Ts family.

It localises to the cytoplasm. Associates with the EF-Tu.GDP complex and induces the exchange of GDP to GTP. It remains bound to the aminoacyl-tRNA.EF-Tu.GTP complex up to the GTP hydrolysis stage on the ribosome. This Chlorobium phaeovibrioides (strain DSM 265 / 1930) (Prosthecochloris vibrioformis (strain DSM 265)) protein is Elongation factor Ts.